Consider the following 451-residue polypeptide: MSFSQDMDNEYEKLIRRMNPPRVVIDNDSCKKATVIRVDSANEYGILLEVVQILTDLNLTITKAYISSDGGWFMDVFNVTDQDGNKVTDEVVLDYIQKSLGPEACFSTSMRSVGVIPSTDSTVIELTGCDRPGLLSELSAVLTHLKCSVLNAEIWTHNTRAAAVMQVTDDLTGCGISDPERLSRIKNLLRNVLKGSNTPREAKTVVSHGEVHTDRRLHQMMFEDRDYEHRLVDDDSSIQDERQRPDVCVDNWLDKDYSVVTVRCKDRPKLLFDTVCTLTDMQYVVFHGSVDTEGTEAFQEYYVRHIDGSPVKSEAEKQRVIQCLEAAIKRRVSEGLKLELCTTDRVGLLSNVTRIFRENSLTVTRAEVKTKGGKALNTFYVSDASGYSIDAKTIDSIRQTIGQTILKVKNNPQEQQQRQKSPSHESPTRFLFGGLFKSKSFVNFGLVRSYS.

ACT domains follow at residues 35 to 118 (VIRV…VIPS), 123 to 200 (VIEL…NTPR), 259 to 335 (VVTV…VSEG), and 337 to 416 (KLEL…QEQQ). The interval 409-428 (KNNPQEQQQRQKSPSHESPT) is disordered. A compositionally biased stretch (polar residues) spans 410 to 420 (NNPQEQQQRQK).

As to expression, highly expressed in flowers and at lower levels in leaves and siliques.

May bind amino acids. This chain is ACT domain-containing protein ACR4, found in Arabidopsis thaliana (Mouse-ear cress).